We begin with the raw amino-acid sequence, 385 residues long: MAVFLSAGLGVLAPPETCPHPETSTSWESRLGTRFPSGSCTMSTEAQAMAEPTGQGPKNPRVSSVMVQLEMKPLWEEFNQLGTEMIVTKAGRRMFPTFQVKILGMDTLADYALLMDFIPLDDKRYRYAFHSSAWLVAGKADPATPGRVHFHPDSPAKGAQWMRQIVSFDKLKLTNNLMDDNGHIILNSMHRYQPRFHVVFVDPRKDSARYAQENFKSFVFTETQFTAVTAYQNHRITQLKIASNPFAKGFREADPDSWPVTPRPLLSIPARSRSSLSPCLLKGSAEREKDTSKASASSSRTPTQPHNQLLPAPDVLLAPATYRPLPYQNLYPGSPSRAGPPRARLAPYPLPNISTAGDQEDPTLAAGLGLLPTSALCLVSNQASQ.

The T-box DNA-binding region spans 69-252; the sequence is LEMKPLWEEF…SNPFAKGFRE (184 aa). Disordered regions lie at residues 283–310 and 328–359; these read GSAE…NQLL and QNLY…AGDQ. Residues 293–307 are compositionally biased toward polar residues; the sequence is KASASSSRTPTQPHN. The segment covering 331 to 347 has biased composition (low complexity); that stretch reads YPGSPSRAGPPRARLAP.

It is found in the nucleus. In terms of biological role, probable transcriptional regulator involved in developmental processes. The sequence is that of T-box transcription factor TBX10 (Tbx10) from Mus musculus (Mouse).